A 107-amino-acid chain; its full sequence is Precursor of CEP14 (107 aa).

An N-terminal signal peptide occupies residues 1 to 21 (MAVRLIPTIWLFIVFAVIVSA). Residues 22–92 (LPSLVSSRKL…GKLRSRHLST (71 aa)) constitute a propeptide that is removed on maturation. N-linked (GlcNAc...) asparagine glycosylation is present at Asn39. Positions 43–76 (REEEKSHMPHVTKTSTLSALPKGKIPNSTPSKKG) are disordered. Hydroxyproline is present on residues Pro101 and Pro103.

Belongs to the C-terminally encoded plant signaling peptide (CEP) family. As to quaternary structure, interacts with CEP receptors (e.g. CEPR1 and CEPR2). In terms of processing, the mature small signaling peptide is generated by proteolytic processing of the longer precursor.

Its subcellular location is the secreted. It localises to the extracellular space. It is found in the apoplast. Its function is as follows. Extracellular signaling peptide that may regulate primary root growth rate and systemic nitrogen (N)-demand signaling. This Arabidopsis thaliana (Mouse-ear cress) protein is Precursor of CEP14.